The sequence spans 116 residues: Large ribosomal subunit protein bL19 (116 aa).

This sequence belongs to the bacterial ribosomal protein bL19 family.

Functionally, this protein is located at the 30S-50S ribosomal subunit interface and may play a role in the structure and function of the aminoacyl-tRNA binding site. This Pseudomonas aeruginosa (strain LESB58) protein is Large ribosomal subunit protein bL19.